The following is a 120-amino-acid chain: Insoluble matrix shell protein 2 (120 aa).

An N-terminal signal peptide occupies residues methionine 1–serine 20.

Component of the acid-insoluble organic matrix of the calcified shell.

It is found in the secreted. This is Insoluble matrix shell protein 2 from Ruditapes philippinarum (Japanese carpet shell).